A 189-amino-acid polypeptide reads, in one-letter code: Interferon alpha-8 (189 aa).

An N-terminal signal peptide occupies residues 1–23; sequence MALTFYLLVALVVLSYKSFSSLG. Intrachain disulfides connect cysteine 24–cysteine 122 and cysteine 52–cysteine 162.

Belongs to the alpha/beta interferon family.

It is found in the secreted. Its function is as follows. Produced by macrophages, IFN-alpha have antiviral activities. Interferon stimulates the production of two enzymes: a protein kinase and an oligoadenylate synthetase. The sequence is that of Interferon alpha-8 (IFNA8) from Homo sapiens (Human).